Consider the following 205-residue polypeptide: Guanylate kinase (205 aa).

Positions 18–196 constitute a Guanylate kinase-like domain; that stretch reads PKLFTISAPA…AYQVLRSIFI (179 aa). 25-32 lines the ATP pocket; the sequence is APAGAGKT.

This sequence belongs to the guanylate kinase family.

It localises to the cytoplasm. The enzyme catalyses GMP + ATP = GDP + ADP. Essential for recycling GMP and indirectly, cGMP. The protein is Guanylate kinase (gmk) of Chlamydia muridarum (strain MoPn / Nigg).